Reading from the N-terminus, the 306-residue chain is Beta-lactamase (306 aa).

A signal peptide spans 1-34; that stretch reads MNVKRKATLKFGICIGLLCVSFTGFNSLFGSTHA. S89 serves as the catalytic Acyl-ester intermediate. 251–253 is a substrate binding site; sequence KSG.

The protein belongs to the class-A beta-lactamase family.

It catalyses the reaction a beta-lactam + H2O = a substituted beta-amino acid. Its function is as follows. This protein is a beta-lactamase with a substrate specificity for penicillins. In Bacillus amyloliquefaciens (Bacillus velezensis), this protein is Beta-lactamase (penP).